Consider the following 100-residue polypeptide: Signal recognition particle 19 kDa protein (100 aa).

Belongs to the SRP19 family. Part of the signal recognition particle protein translocation system, which is composed of SRP and FtsY. Archaeal SRP consists of a 7S RNA molecule of 300 nucleotides and two protein subunits: SRP54 and SRP19.

Its subcellular location is the cytoplasm. In terms of biological role, involved in targeting and insertion of nascent membrane proteins into the cytoplasmic membrane. Binds directly to 7S RNA and mediates binding of the 54 kDa subunit of the SRP. The protein is Signal recognition particle 19 kDa protein of Caldivirga maquilingensis (strain ATCC 700844 / DSM 13496 / JCM 10307 / IC-167).